The chain runs to 1982 residues: Chromodomain-helicase-DNA-binding protein Mi-2 homolog (1982 aa).

A compositionally biased stretch (acidic residues) spans 1-19 (MASEEENDDNFQEEEEAQE). Disordered stretches follow at residues 1–125 (MASE…PSVE), 192–348 (IQQE…KAKT), and 354–373 (FKKK…EDGE). Positions 52–62 (RKKKGKKRKTR) are enriched in basic residues. A phosphoserine mark is found at serine 79 and serine 83. A compositionally biased stretch (basic and acidic residues) spans 104–116 (RKEEKQAAKEKES). Phosphoserine occurs at positions 201, 204, 210, and 221. Over residues 218 to 232 (EPRSSRSSRNEKPDD) the composition is skewed to basic and acidic residues. The span at 233-247 (IYEEAVEEEEEEEEE) shows a compositional bias: acidic residues. The span at 251 to 266 (PRRKRSGRGKKGRRPS) shows a compositional bias: basic residues. 7 positions are modified to phosphoserine: serine 284, serine 285, serine 292, serine 295, serine 299, serine 310, and serine 313. Over residues 295–319 (SERDSDLEFERMLQKSDDSADEKEA) the composition is skewed to basic and acidic residues. Residues 354–364 (FKKKNKLKKTK) show a composition bias toward basic residues. 2 consecutive PHD-type zinc fingers follow at residues 377-424 (QDYC…CEAD) and 437-484 (QEFC…CSCP). 2 Chromo domains span residues 488-566 (GKAE…PPKF) and 612-673 (LIVQ…SETT). Positions 671 to 712 (ETTQSRSKKSKKGRKSKLKVEDDEDRPVKHYTPPPEKPTTDL) are disordered. A compositionally biased stretch (basic residues) spans 676–687 (RSKKSKKGRKSK). Tyrosine 701 carries the phosphotyrosine modification. Threonine 702 bears the Phosphothreonine mark. A Helicase ATP-binding domain is found at 742-924 (RYSWGQGIDT…FHLLNFLSRD (183 aa)). Position 755–762 (755–762 (DEMGLGKT)) interacts with ATP. The short motif at 875 to 878 (DEAH) is the DEAH box element. The 163-residue stretch at 1056 to 1218 (LLSKMLKQLK…GANFTKQELD (163 aa)) folds into the Helicase C-terminal domain. Disordered regions lie at residues 1331–1396 (NYTD…RPLP) and 1536–1715 (EAPP…TGKG). Polar residues predominate over residues 1349-1361 (WQDNGSEYNSEYS). A compositionally biased stretch (acidic residues) spans 1364-1377 (SDEDGGDDDFDDQN). The segment covering 1547–1568 (SATTSNSVTPATSAAPSPAPAS) has biased composition (low complexity). 3 stretches are compositionally biased toward basic and acidic residues: residues 1569-1611 (EKGE…KQEN), 1621-1664 (KPSD…DKKP), and 1679-1689 (MIVKEDGELEK). 2 positions are modified to phosphoserine: serine 1691 and serine 1694. A compositionally biased stretch (low complexity) spans 1700-1711 (AVAAATSAATGA).

It belongs to the SNF2/RAD54 helicase family. In terms of assembly, interacts with the NuRD complex member HDAC1/Rpd3.

It is found in the nucleus. Its subcellular location is the chromosome. It catalyses the reaction ATP + H2O = ADP + phosphate + H(+). ATPase activity is stimulated by binding to either DNA or nucleosomes. In terms of biological role, ATP-dependent chromatin-remodeling factor which acts in nucleosome-remodeling by catalyzing ATP-dependent nucleosome mobilization. Involved in regulating transcription. Plays a vital role in development. Binds to a portion of Hunchback (HB) protein that is critical for repression of bithorax complex (BXC) genes. May also function in polycomb group (PcG) repression of Hox genes. May also act as part of the nucleosome remodeling and deacetylase complex (the NuRD complex) which participates in the remodeling of chromatin by deacetylating histones. The polypeptide is Chromodomain-helicase-DNA-binding protein Mi-2 homolog (Mi-2) (Drosophila melanogaster (Fruit fly)).